Reading from the N-terminus, the 215-residue chain is Large ribosomal subunit protein uL3 (215 aa).

Q156 carries the post-translational modification N5-methylglutamine.

The protein belongs to the universal ribosomal protein uL3 family. In terms of assembly, part of the 50S ribosomal subunit. Forms a cluster with proteins L14 and L19. Methylated by PrmB.

One of the primary rRNA binding proteins, it binds directly near the 3'-end of the 23S rRNA, where it nucleates assembly of the 50S subunit. This Xylella fastidiosa (strain 9a5c) protein is Large ribosomal subunit protein uL3.